A 103-amino-acid chain; its full sequence is Somatostatin-2 (103 aa).

The N-terminal stretch at 1 to 21 (MLGSAGTLLLLLLAWGARALS) is a signal peptide. The propeptide occupies 22–87 (QPDDNRITTG…VKFPRLSLRE (66 aa)). A disulfide bridge links cysteine 92 with cysteine 103.

This sequence belongs to the somatostatin family.

The protein localises to the secreted. Somatostatin inhibits the release of somatotropin. This is Somatostatin-2 (sst2) from Pelophylax ridibundus (Marsh frog).